The primary structure comprises 48 residues: Large ribosomal subunit protein bL34 (48 aa).

It belongs to the bacterial ribosomal protein bL34 family.

This is Large ribosomal subunit protein bL34 (rpmH) from Mycoplasma pneumoniae (strain ATCC 29342 / M129 / Subtype 1) (Mycoplasmoides pneumoniae).